The primary structure comprises 477 residues: Beta-agarase D (477 aa).

The signal sequence occupies residues 1–20 (MKRSILLAIIAFLQFFTSYG). Residues 22-378 (YDWDNVPIPA…WIRVYKPVNA (357 aa)) form the GH16 domain. Substrate-binding positions include 94–104 (MQNHVAVSGGN), 123–125 (NNT), glutamate 174, glutamate 179, arginine 206, and glutamate 340. Glutamate 174 serves as the catalytic Nucleophile. Residue glutamate 179 is the Proton donor of the active site. Residues 382 to 391 (NSAETTSTVE) show a composition bias toward low complexity. Residues 382–402 (NSAETTSTVEKPASFEPQGQP) form a disordered region.

The protein belongs to the glycosyl hydrolase 16 family.

It is found in the secreted. The enzyme catalyses Hydrolysis of (1-&gt;4)-beta-D-galactosidic linkages in agarose, giving the tetramer as the predominant product.. Cleaves the beta-1,4-linkages between beta-D-galactose and alpha-L-3,6-anhydro-galactose residues in agarose. Cleaves agarose in a random manner with retention of the anomeric-bond configuration, producing beta-anomers that give rise progressively to alpha-anomers when mutarotation takes place. Requires at least 4 consecutive agarose units and is highly intolerant to modifications. This chain is Beta-agarase D (agaD), found in Zobellia galactanivorans (strain DSM 12802 / CCUG 47099 / CIP 106680 / NCIMB 13871 / Dsij).